The primary structure comprises 112 residues: Cell cycle protein GpsB (112 aa).

Positions 38 to 72 (IKDYEAFHKEFEQLKQQNARLKRELEEQKLVATQV) form a coiled coil.

It belongs to the GpsB family. In terms of assembly, forms polymers through the coiled coil domains. Interacts with PBP1, MreC and EzrA.

The protein localises to the cytoplasm. Divisome component that associates with the complex late in its assembly, after the Z-ring is formed, and is dependent on DivIC and PBP2B for its recruitment to the divisome. Together with EzrA, is a key component of the system that regulates PBP1 localization during cell cycle progression. Its main role could be the removal of PBP1 from the cell pole after pole maturation is completed. Also contributes to the recruitment of PBP1 to the division complex. Not essential for septum formation. The chain is Cell cycle protein GpsB from Bacillus cereus (strain ZK / E33L).